Reading from the N-terminus, the 702-residue chain is Glucoamylase (702 aa).

An N-terminal signal peptide occupies residues 1-21; it reads MSRKLIKYLPLLVLASSVLSG. Cys22 is lipidated: N-palmitoyl cysteine. The S-diacylglycerol cysteine moiety is linked to residue Cys22. Trp342 provides a ligand contact to substrate. The Proton acceptor role is filled by Glu452. Residue Glu455 is the Proton donor of the active site.

Belongs to the glycosyl hydrolase 15 family.

It localises to the cell membrane. It catalyses the reaction Hydrolysis of terminal (1-&gt;4)-linked alpha-D-glucose residues successively from non-reducing ends of the chains with release of beta-D-glucose.. Functionally, CGA has typical kinetic properties for a glucoamylase, but this bacterial enzyme had higher isomaltose-hydrolyzing activity than other eukaryotic glucoamylases. The polypeptide is Glucoamylase (cga) (Clostridium sp. (strain G0005)).